The sequence spans 868 residues: MQNAESWFKKYWHLSVLVIAALISVKLRILNPWNSVFTWTVRLGGNDPWYYYRLIENTIHNFPHRIWFDPFTYYPYGSYTHFGPFLVYLGSIAGIIFSATSGESLRAVLAFIPAIGGVLAILPVYLLTREVFDKRAAVIAAFLIAIVPGQFLQRSILGFNDHHIWEAFWQVSALGTFLLAYNRWKGHDLSHNLTARQMAYPVIAGITIGLYVLSWGAGFIIAPIILAFMFFAFVLAGFVNADRKNLSLVAVVTFAVSALIYLPFAFNYPGFSTIFYSPFQLLVLLGSAVIAAAFYQIEKWNDVGFFERVGLGRKGMPLAVIVLTALIMGLFFVISPDFARNLLSVVRVVQPKGGALTIAEVYPFFFTHNGEFTLTNAVLHFGALFFFGMAGILYSAYRFLKRRSFPEMALLIWAIAMFIALWGQNRFAYYFAAVSAVYSALALSVVFDKLHLYRALENAIGARNKLSYFRVAFALLIALAAIYPTYILADAQSSYAGGPNKQWYDALTWMRENTPDGEKYDEYYLQLYPTPQSNKEPFSYPFETYGVISWWDYGHWIEAVAHRMPIANPFQAGIGNKYNNVPGASSFFTAENESYAEFVAEKLNVKYVVSDIEMETGKYYAMAVWAEGDLPLAEKYYGGYFYYSPTGTFGYANSQWDIPLNSIIIPLRIPSELYYSTMEAKLHLFDGSGLSHYRMIYESDYPAEWKSYSSQVNLNNESQVLQTALYEAVMRARYGVSPTMGTQEVLYKYAYTQLYEKKMGIPVKIAPSGYVKIFERVKGAVVTGKVSANVTEVSVNATIKTNQNRTFEYWQTVEVKNGTYTVVLPYSHNSDYPVKPITPYHIKAGNVVKEITIYESQVQNGEIIQLDL.

Topologically, residues 1-16 are cytoplasmic; sequence MQNAESWFKKYWHLSV. Residues 17-36 form a helical membrane-spanning segment; the sequence is LVIAALISVKLRILNPWNSV. Topologically, residues 37–101 are extracellular; the sequence is FTWTVRLGGN…IAGIIFSATS (65 aa). The short motif at 45–47 is the DXD motif 1 element; sequence GND. Asp47 contributes to the Mn(2+) binding site. Position 81 (His81) interacts with a glycophospholipid. A helical membrane pass occupies residues 102 to 131; that stretch reads GESLRAVLAFIPAIGGVLAILPVYLLTREV. At 132–133 the chain is on the cytoplasmic side; that stretch reads FD. A helical transmembrane segment spans residues 134–153; the sequence is KRAAVIAAFLIAIVPGQFLQ. Over 154-162 the chain is Extracellular; it reads RSILGFNDH. Mn(2+) is bound at residue Asp161. A DXD motif 2 motif is present at residues 161 to 163; it reads DHH. Residue His162 participates in a glycophospholipid binding. Mn(2+) is bound at residue His163. The helical transmembrane segment at 163–184 threads the bilayer; that stretch reads HIWEAFWQVSALGTFLLAYNRW. Over 185-199 the chain is Cytoplasmic; that stretch reads KGHDLSHNLTARQMA. The helical transmembrane segment at 200-212 threads the bilayer; it reads YPVIAGITIGLYV. Topologically, residues 213–215 are extracellular; that stretch reads LSW. Residues 216–238 form a helical membrane-spanning segment; that stretch reads GAGFIIAPIILAFMFFAFVLAGF. At 239–241 the chain is on the cytoplasmic side; it reads VNA. The helical transmembrane segment at 242-262 threads the bilayer; it reads DRKNLSLVAVVTFAVSALIYL. The Extracellular portion of the chain corresponds to 263–279; sequence PFAFNYPGFSTIFYSPF. The chain crosses the membrane as a helical span at residues 280-303; the sequence is QLLVLLGSAVIAAAFYQIEKWNDV. The Cytoplasmic segment spans residues 304–312; sequence GFFERVGLG. A helical membrane pass occupies residues 313–330; the sequence is RKGMPLAVIVLTALIMGL. Topologically, residues 331–373 are extracellular; it reads FFVISPDFARNLLSVVRVVQPKGGALTIAEVYPFFFTHNGEFT. The short motif at 357 to 360 is the TIXE motif element; sequence TIAE. The helical transmembrane segment at 374-396 threads the bilayer; that stretch reads LTNAVLHFGALFFFGMAGILYSA. The Cytoplasmic segment spans residues 397–404; the sequence is YRFLKRRS. The chain crosses the membrane as a helical span at residues 405–423; sequence FPEMALLIWAIAMFIALWG. The Extracellular segment spans residues 424–427; it reads QNRF. Arg426 is a binding site for a glycophospholipid. A helical transmembrane segment spans residues 428 to 452; the sequence is AYYFAAVSAVYSALALSVVFDKLHL. Residues 453 to 468 are Cytoplasmic-facing; it reads YRALENAIGARNKLSY. A helical membrane pass occupies residues 469–494; that stretch reads FRVAFALLIALAAIYPTYILADAQSS. The Extracellular portion of the chain corresponds to 495-868; the sequence is YAGGPNKQWY…QNGEIIQLDL (374 aa). Residues 550-552 form an interacts with target acceptor peptide in protein substrate region; sequence WWD. The WWDYG motif motif lies at 550–554; it reads WWDYG. Residues 613–622 carry the DKi motif motif; it reads EMETGKYYAM.

It belongs to the STT3 family. It depends on Mg(2+) as a cofactor. Mn(2+) is required as a cofactor. The cofactor is Zn(2+).

Its subcellular location is the cell membrane. The catalysed reaction is an archaeal dolichyl phosphooligosaccharide + [protein]-L-asparagine = an archaeal dolichyl phosphate + a glycoprotein with the oligosaccharide chain attached by N-beta-D-glycosyl linkage to a protein L-asparagine.. It functions in the pathway protein modification; protein glycosylation. In terms of biological role, oligosaccharyl transferase (OST) that catalyzes the initial transfer of a defined glycan (a glucose-linked heptasaccharide composed of 3 Glc, 2 Man, 2 Gal and a sulfate for A.fulgidus AglB-L) from the lipid carrier dolichol-monophosphate to an asparagine residue within an Asn-X-Ser/Thr consensus motif in nascent polypeptide chains, the first step in protein N-glycosylation. The chain is Dolichyl-phosphooligosaccharide-protein glycotransferase 3 (aglB3) from Archaeoglobus fulgidus (strain ATCC 49558 / DSM 4304 / JCM 9628 / NBRC 100126 / VC-16).